The chain runs to 173 residues: Alpha-crystallin A chain (173 aa).

An N-acetylmethionine modification is found at methionine 1. A required for complex formation with BFSP1 and BFSP2 region spans residues methionine 1 to glutamate 63. Position 6 is a deamidated glutamine; partial (glutamine 6). An N-linked (Glc) (glycation) lysine glycan is attached at lysine 11. A Phosphoserine modification is found at serine 45. The residue at position 50 (glutamine 50) is a Deamidated glutamine; partial. One can recognise a sHSP domain in the interval leucine 52–serine 162. N6-acetyllysine is present on lysine 70. N-linked (Glc) (glycation) lysine glycosylation is present at lysine 78. Glutamine 90 is modified (deamidated glutamine; partial). Lysine 99 bears the N6-acetyllysine mark. Histidine 100 is a binding site for Zn(2+). Deamidated asparagine; partial is present on asparagine 101. Zn(2+) contacts are provided by glutamate 102 and histidine 107. Serine 122 carries the post-translational modification Phosphoserine. Asparagine 123 bears the Deamidated asparagine; partial mark. The disordered stretch occupies residues proline 144–serine 173. Over residues glycine 153–proline 167 the composition is skewed to basic and acidic residues. Histidine 154 serves as a coordination point for Zn(2+). Residues arginine 157–arginine 163 form an important for oligomerization region. Serine 162 carries O-linked (GlcNAc) serine glycosylation.

The protein belongs to the small heat shock protein (HSP20) family. As to quaternary structure, heteromer composed of three CRYAA and one CRYAB subunits. Inter-subunit bridging via zinc ions enhances stability, which is crucial as there is no protein turn over in the lens. Can also form homodimers and homotetramers (dimers of dimers) which serve as the building blocks of homooligomers. Within homooligomers, the zinc-binding motif is created from residues of 3 different molecules. His-100 and Glu-102 from one molecule are ligands of the zinc ion, and His-107 and His-154 residues from additional molecules complete the site with tetrahedral coordination geometry. Part of a complex required for lens intermediate filament formation composed of BFSP1, BFSP2 and CRYAA. Post-translationally, acetylation at Lys-70 may increase chaperone activity. In terms of processing, undergoes age-dependent proteolytical cleavage at the C-terminus.

Its subcellular location is the cytoplasm. The protein localises to the nucleus. Its function is as follows. Contributes to the transparency and refractive index of the lens. Acts as a chaperone, preventing aggregation of various proteins under a wide range of stress conditions. Required for the correct formation of lens intermediate filaments as part of a complex composed of BFSP1, BFSP2 and CRYAA. This Bos taurus (Bovine) protein is Alpha-crystallin A chain (CRYAA).